Consider the following 191-residue polypeptide: Putative resolvase L103 (191 aa).

Positions 11-30 (LEVLKVHYQTLYRMEEKGLI) form a DNA-binding region, H-T-H motif. A Resolvase/invertase-type recombinase catalytic domain is found at 59 to 191 (KGICYCRVSS…KKSGKLKAKK (133 aa)). Positions 65–91 (RVSSKKQIKDLNRQVEYMEKNYPEYEI) form a coiled coil. Ser-67 serves as the catalytic O-(5'-phospho-DNA)-serine intermediate.

This sequence belongs to the site-specific recombinase resolvase family.

Resolvase catalyzes the resolution (a site-specific recombination) of the cointegrated replicon to yield the final transposition products. The sequence is that of Putative resolvase L103 from Acanthamoeba polyphaga (Amoeba).